A 328-amino-acid chain; its full sequence is WUSCHEL-related homeobox 6 (328 aa).

Over residues 1-11 (MEGSSNSPDRQ) the composition is skewed to polar residues. The segment at 1–45 (MEGSSNSPDRQSSGGSPPEERGGGGSGGGGGRSAAGEPVRSRWTP) is disordered. Residues 23 to 33 (GGGSGGGGGRS) are compositionally biased toward gly residues. The segment at residues 38-102 (PVRSRWTPKP…NRRSRSRRRQ (65 aa)) is a DNA-binding region (homeobox; WUS-type).

This sequence belongs to the WUS homeobox family.

Its subcellular location is the nucleus. Transcription factor which may be involved in developmental processes. The chain is WUSCHEL-related homeobox 6 (WOX6) from Oryza sativa subsp. japonica (Rice).